The primary structure comprises 181 residues: NAD(P)H-quinone oxidoreductase subunit I, chloroplastic (181 aa).

2 consecutive 4Fe-4S ferredoxin-type domains span residues 55-84 (GRIHFEFDKCIACEVCVRVCPINLPVVDWE) and 95-124 (KNYSIDFAVCIFCGNCVEYCPTNCLSMTEE). [4Fe-4S] cluster is bound by residues C64, C67, C70, C74, C104, C107, C110, and C114.

It belongs to the complex I 23 kDa subunit family. NDH is composed of at least 16 different subunits, 5 of which are encoded in the nucleus. It depends on [4Fe-4S] cluster as a cofactor.

The protein resides in the plastid. It is found in the chloroplast thylakoid membrane. The enzyme catalyses a plastoquinone + NADH + (n+1) H(+)(in) = a plastoquinol + NAD(+) + n H(+)(out). It carries out the reaction a plastoquinone + NADPH + (n+1) H(+)(in) = a plastoquinol + NADP(+) + n H(+)(out). Its function is as follows. NDH shuttles electrons from NAD(P)H:plastoquinone, via FMN and iron-sulfur (Fe-S) centers, to quinones in the photosynthetic chain and possibly in a chloroplast respiratory chain. The immediate electron acceptor for the enzyme in this species is believed to be plastoquinone. Couples the redox reaction to proton translocation, and thus conserves the redox energy in a proton gradient. The protein is NAD(P)H-quinone oxidoreductase subunit I, chloroplastic of Angiopteris evecta (Mule's foot fern).